Consider the following 329-residue polypeptide: Protein-arginine N-acetylglucosaminyltransferase NleB1 (329 aa).

The N-beta-linked (GlcNAc) arginine; by autocatalysis glycan is linked to arginine 13. A UDP-N-acetyl-alpha-D-glucosamine-binding site is contributed by 48-50 (QWF). Arginine 53 is a glycosylation site (N-beta-linked (GlcNAc) arginine; by autocatalysis). Tyrosine 72 lines the UDP-N-acetyl-alpha-D-glucosamine pocket. Arginine 159 carries N-beta-linked (GlcNAc) arginine; by autocatalysis glycosylation. A UDP-N-acetyl-alpha-D-glucosamine-binding site is contributed by 219-222 (YLDA). Residues 221-223 (DAD) carry the DXD motif motif. Position 223 (aspartate 223) interacts with Mn(2+). The Proton acceptor role is filled by glutamate 253. Arginine 293 carries N-beta-linked (GlcNAc) arginine; by autocatalysis glycosylation. Mn(2+) is bound by residues asparagine 320 and serine 322. Residues serine 322 and 327–329 (SSW) each bind UDP-N-acetyl-alpha-D-glucosamine.

The protein belongs to the glycosyltransferase NleB family. Requires Mn(2+) as cofactor. Auto-glycosylated: arginine GlcNAcylation is required for activity toward death domain-containing host target proteins.

It is found in the secreted. The protein localises to the host cytoplasm. It carries out the reaction L-arginyl-[protein] + UDP-N-acetyl-alpha-D-glucosamine = N(omega)-(N-acetyl-beta-D-glucosaminyl)-L-arginyl-[protein] + UDP + H(+). Protein-arginine N-acetylglucosaminyltransferase activity is inhibited by 100066N compound (flavone analog) and 102644N compound (a substituted isoxazole). In terms of biological role, protein-arginine N-acetylglucosaminyltransferase effector that disrupts TNF signaling in infected cells, including NF-kappa-B signaling, apoptosis and necroptosis. Acts by catalyzing the transfer of a single N-acetylglucosamine (GlcNAc) to a conserved arginine residue in the death domain of host proteins such as FADD: arginine GlcNAcylation prevents homotypic/heterotypic death domain interactions and assembly of the oligomeric TNF-alpha receptor complex, thereby disrupting TNF signaling. Also acts on host proteins without a death domain: catalyzes arginine GlcNAcylation of host GAPDH protein, thereby preventing GAPDH interaction with TRAF2, leading to inhibit NF-kappa-B signaling. Catalyzes auto-GlcNAcylation, which is required for activity toward death domain-containing host target proteins. The chain is Protein-arginine N-acetylglucosaminyltransferase NleB1 from Escherichia coli O157:H7.